The primary structure comprises 270 residues: GILVVSAADGPMPQTREHILLSRNVGVPALVVFLNKVDMVDDEELLELVEMEVRDLLSEYDFPGDDVPVIAGSALKALEGDEKYEEKILELMQAVDDYIPTPERDSDKPFMMPVEDVFSITGRGTVATGRVERGQIKVGEEVEIIGLHDTSKTTVTGVEMFRKLLDYAEAGDNIGALLRGVAREDVQRGQVLAAPGSITPHTKFKAEVYVLSKDEGGRHTPFFSNYRPQFYFRTTDVTGVVQLPEGTEMVMPGDNVEMTVELIAPIAIED.

The tr-type G domain occupies 1 to 103 (GILVVSAADG…AVDDYIPTPE (103 aa)). 35-38 (NKVD) serves as a coordination point for GTP.

It belongs to the TRAFAC class translation factor GTPase superfamily. Classic translation factor GTPase family. EF-Tu/EF-1A subfamily. Monomer.

The protein localises to the cytoplasm. It carries out the reaction GTP + H2O = GDP + phosphate + H(+). GTP hydrolase that promotes the GTP-dependent binding of aminoacyl-tRNA to the A-site of ribosomes during protein biosynthesis. In Staphylococcus warneri, this protein is Elongation factor Tu (tuf).